We begin with the raw amino-acid sequence, 286 residues long: Neuferricin homolog (286 aa).

An N-terminal signal peptide occupies residues 1–23 (MFGFVKYLFKLQFLFILAAVLAG). The Cytochrome b5 heme-binding domain occupies 61–145 (ATVLTSAELS…KPNDLLGLAN (85 aa)). The stretch at 176–200 (HKYLALLEQAQIAKAEVDELRSKYP) forms a coiled coil.

It belongs to the cytochrome b5 family. MAPR subfamily.

The protein localises to the secreted. Functionally, heme-binding protein. This Drosophila pseudoobscura pseudoobscura (Fruit fly) protein is Neuferricin homolog.